Consider the following 1941-residue polypeptide: Diacylglycerol kinase eta (1941 aa).

Residues serine 93–alanine 186 enclose the PH domain. Phorbol-ester/DAG-type zinc fingers lie at residues histidine 206–cysteine 256 and proline 279–cysteine 330. Residues glycine 361–lysine 497 form the DAGKc domain. 4 disordered regions span residues threonine 1030–arginine 1068, cysteine 1132–threonine 1164, leucine 1215–serine 1257, and arginine 1276–aspartate 1295. The segment covering asparagine 1133–asparagine 1155 has biased composition (low complexity). In terms of domain architecture, SAM spans tryptophan 1878–asparagine 1941.

This sequence belongs to the eukaryotic diacylglycerol kinase family.

Its subcellular location is the cytoplasm. It catalyses the reaction a 1,2-diacyl-sn-glycerol + ATP = a 1,2-diacyl-sn-glycero-3-phosphate + ADP + H(+). Phosphorylates diacylglycerol (DAG) to generate phosphatidic acid (PA). The chain is Diacylglycerol kinase eta from Drosophila grimshawi (Hawaiian fruit fly).